Here is a 179-residue protein sequence, read N- to C-terminus: Large ribosomal subunit protein uL5 (179 aa).

Belongs to the universal ribosomal protein uL5 family. As to quaternary structure, part of the 50S ribosomal subunit; part of the 5S rRNA/L5/L18/L25 subcomplex. Contacts the 5S rRNA and the P site tRNA. Forms a bridge to the 30S subunit in the 70S ribosome.

In terms of biological role, this is one of the proteins that bind and probably mediate the attachment of the 5S RNA into the large ribosomal subunit, where it forms part of the central protuberance. In the 70S ribosome it contacts protein S13 of the 30S subunit (bridge B1b), connecting the 2 subunits; this bridge is implicated in subunit movement. Contacts the P site tRNA; the 5S rRNA and some of its associated proteins might help stabilize positioning of ribosome-bound tRNAs. The protein is Large ribosomal subunit protein uL5 of Trichlorobacter lovleyi (strain ATCC BAA-1151 / DSM 17278 / SZ) (Geobacter lovleyi).